The following is a 1070-amino-acid chain: Protocadherin-8 (1070 aa).

Residues Met1 to Ser29 form the signal peptide. Cadherin domains follow at residues Lys30–Phe135, Pro136–Phe245, Gln247–Ile354, Gln393–Phe497, Thr498–Leu609, and Ala615–Ser721. Over Lys30–Pro747 the chain is Extracellular. Asn616 carries N-linked (GlcNAc...) asparagine glycosylation. A compositionally biased stretch (low complexity) spans Ser716–Pro725. The tract at residues Ser716–Pro740 is disordered. The chain crosses the membrane as a helical span at residues Leu748–Ile768. The Cytoplasmic portion of the chain corresponds to Ala769 to Val1070. Disordered stretches follow at residues Lys777–Ser859, Arg906–Ser928, and Ile1046–Val1070. Composition is skewed to basic and acidic residues over residues Arg780–Pro790 and Arg906–Ser921. Ser1053 carries the phosphoserine modification.

The N-terminal extracellular domain forms homophilic interactions; these interactions activate p38 MAPK via TAOK2 and trigger endocytosis. Interacts with CDH2; this interaction may lead to CDH2 cointernalization. Interacts with CDH11. Interacts with TAOK2.

It localises to the cell membrane. The protein localises to the cell projection. It is found in the dendrite. The protein resides in the presynaptic cell membrane. Its subcellular location is the postsynaptic cell membrane. In terms of biological role, calcium-dependent cell-adhesion protein. May play a role in activity-induced synaptic reorganization underlying long term memory. Could be involved in CDH2 internalization through TAOK2/p38 MAPK pathway. In hippocampal neurons, may play a role in the down-regulation of dendritic spines, maybe through its action on CDH2 endocytosis. This chain is Protocadherin-8 (Pcdh8), found in Mus musculus (Mouse).